Here is a 537-residue protein sequence, read N- to C-terminus: Berberine bridge enzyme-like 26 (537 aa).

An N-terminal signal peptide occupies residues 1–27; sequence MGISKPLPLFSILVLYFSLYTITPTSS. An intrachain disulfide couples C38 to C102. Residue N59 is glycosylated (N-linked (GlcNAc...) asparagine). Residues 80–256 form the FAD-binding PCMH-type domain; the sequence is SMPKPGFIFS…LAWKIKLVPV (177 aa). The segment at residues 117 to 181 is a cross-link (6-(S-cysteinyl)-8alpha-(pros-histidyl)-FAD (His-Cys)); sequence HDYEGLSYVS…KVHGFPAGLC (65 aa). N306 is a glycosylation site (N-linked (GlcNAc...) asparagine).

It belongs to the oxygen-dependent FAD-linked oxidoreductase family. FAD serves as cofactor. The FAD cofactor is bound via a bicovalent 6-S-cysteinyl, 8alpha-N1-histidyl FAD linkage.

It is found in the secreted. The protein localises to the cell wall. The chain is Berberine bridge enzyme-like 26 from Arabidopsis thaliana (Mouse-ear cress).